The chain runs to 84 residues: Large ribosomal subunit protein bL31 (84 aa).

Disordered stretches follow at residues 1–41 and 63–84; these read MQHD…DSTN and RRYG…AADE. Residues 21–30 show a composition bias toward polar residues; that stretch reads EITTRSTMET. Positions 68 to 84 are enriched in acidic residues; the sequence is TDDDEGDDEETEDAADE.

It belongs to the bacterial ribosomal protein bL31 family. Type A subfamily. In terms of assembly, part of the 50S ribosomal subunit.

Binds the 23S rRNA. This chain is Large ribosomal subunit protein bL31, found in Salinibacter ruber (strain DSM 13855 / M31).